Here is a 134-residue protein sequence, read N- to C-terminus: Calvin cycle protein CP12-3, chloroplastic (134 aa).

The disordered stretch occupies residues 1–21; it reads MISGSATASHGRVLLPSQRER. The transit peptide at 1-42 directs the protein to the chloroplast; the sequence is MISGSATASHGRVLLPSQRERRPVSTGSNILRFRETVPRQFS. 2 cysteine pairs are disulfide-bonded: Cys78–Cys87 and Cys120–Cys129.

The protein belongs to the CP12 family. In terms of assembly, monomer. Component of a complex that contains two dimers of PRK, two tetramers of GAPDH and CP12. CP12 associates with GAPDH, causing its conformation to change. This GAPDH/CP12 complex binds PRK to form a half-complex (one unit). This unit probably dimerizes due partially to interactions between the enzymes of each unit. In terms of processing, contains two disulfide bonds; only the oxidized protein, with two disulfide bonds, is active in complex formation. The C-terminal disulfide is involved in the interaction with GAPDH and the N-terminal disulfide mediates the binding of PRK with this binary complex. Mostly expressed, at low levels, in stems and, to a lesser extent, in leaves and roots.

Its subcellular location is the plastid. It is found in the chloroplast. In terms of biological role, acts as a linker essential in the assembly of a core complex of PRK/GAPDH. Coordinates the reversible inactivation of chloroplast enzymes GAPDH and PRK during darkness in photosynthetic tissues. The polypeptide is Calvin cycle protein CP12-3, chloroplastic (CP12-3) (Arabidopsis thaliana (Mouse-ear cress)).